A 213-amino-acid polypeptide reads, in one-letter code: Thymidine kinase (213 aa).

ATP-binding positions include 22–29 (GSMFSGKT) and 94–97 (DEAQ). Glutamate 95 acts as the Proton acceptor in catalysis. Positions 151, 154, 183, and 186 each coordinate Zn(2+). Positions 185–213 (RCFQPPRPTSTSSLKAPAPAATAPRPELP) are disordered. Residues 193–213 (TSTSSLKAPAPAATAPRPELP) are compositionally biased toward low complexity.

It belongs to the thymidine kinase family. Homotetramer.

Its subcellular location is the cytoplasm. The enzyme catalyses thymidine + ATP = dTMP + ADP + H(+). The polypeptide is Thymidine kinase (Rhodothermus sp. (strain ITI 518)).